The sequence spans 977 residues: SLIT and NTRK-like protein 3 (977 aa).

The signal sequence occupies residues 1–26 (MKPSIAEMLHRGRMLWIILLSTIALG). Residues 29 to 654 (TPIPLIEDSE…SPPGGPVPLS (626 aa)) lie on the Extracellular side of the membrane. Asn-68 carries an N-linked (GlcNAc...) asparagine glycan. LRR repeat units lie at residues 78 to 99 (RPFK…SFLH), 102 to 123 (NAVS…AFNG), 126 to 147 (ILKR…TFLG), 150 to 171 (SLEY…AFRN), 174 to 195 (KLRV…LFKA), and 197 to 218 (SLTH…GMLD). The LRRCT 1 domain occupies 232 to 283 (NPWNCTCEIVQLKSWLERIPYTALVGDITCETPFHFHGKDLREIRKTELCPL). The segment at 325 to 360 (EYKSSNKQPKPTKQPRTPRPPSTSQALYPGPNQPPI) is disordered. Positions 364–406 (QTRPPIPIICPTGCTCNLHINDLGLTVNCKERGFNNISELLPR) constitute an LRRNT domain. 6 LRR repeats span residues 409–430 (NAKK…DFWN), 433–454 (SLDL…AFIN), 457–478 (NLKS…MFRG), 481–502 (SLHY…AFSL), 505–526 (NLKL…AFAG), and 528–549 (SLAR…GVLE). The 52-residue stretch at 562–613 (NPWDCTCDLVPFKQWIETISSVSVVGDVLCRSPENLTHRDVRTIELEVLCPE) folds into the LRRCT 2 domain. Asn-596 carries N-linked (GlcNAc...) asparagine glycosylation. A helical transmembrane segment spans residues 655 to 675 (VLILSLLVLFFSAVFVAAGLF). Topologically, residues 676-977 (AYVLRRRRKK…EVLEKTTYRF (302 aa)) are cytoplasmic. Disordered stretches follow at residues 708–735 (LFED…KAPP) and 761–790 (EEEV…MGEA). Residues 711–724 (DGGGGGGGSGGGGR) are compositionally biased toward gly residues. Over residues 765-775 (AVSSAQEAGSA) the composition is skewed to low complexity.

The protein belongs to the SLITRK family. In terms of tissue distribution, expressed in the occipital lobe of the cerebral cortex of the brain. Expressed at higher levels in some astrocytic brain tumors such as astrocytomas, oligodendrogliomas, glioblastomas, gangliogliomas and primitive neuroectodermal tumors.

The protein localises to the membrane. Suppresses neurite outgrowth. This chain is SLIT and NTRK-like protein 3 (SLITRK3), found in Homo sapiens (Human).